The sequence spans 388 residues: Processive diacylglycerol beta-glucosyltransferase (388 aa).

It belongs to the glycosyltransferase 28 family. UgtP subfamily.

It localises to the cell membrane. It carries out the reaction a 1,2-diacyl-3-O-(beta-D-glucopyranosyl)-sn-glycerol + UDP-alpha-D-glucose = a 1,2-diacyl-3-O-(beta-D-Glc-(1-&gt;6)-beta-D-Glc)-sn-glycerol + UDP + H(+). It catalyses the reaction a 1,2-diacyl-3-O-(beta-D-Glc-(1-&gt;6)-beta-D-Glc)-sn-glycerol + UDP-alpha-D-glucose = a 1,2-diacyl-3-O-(beta-D-Glc-(1-&gt;6)-beta-D-Glc-(1-&gt;6)-beta-D-Glc)-sn-glycerol + UDP + H(+). The enzyme catalyses a 1,2-diacyl-sn-glycerol + UDP-alpha-D-glucose = a 1,2-diacyl-3-O-(beta-D-glucopyranosyl)-sn-glycerol + UDP + H(+). The protein operates within glycolipid metabolism; diglucosyl-diacylglycerol biosynthesis. Its function is as follows. Processive glucosyltransferase involved in the biosynthesis of both the bilayer- and non-bilayer-forming membrane glucolipids. Is able to successively transfer up to three glucosyl residues to diacylglycerol (DAG), thereby catalyzing the formation of beta-monoglucosyl-DAG (3-O-(beta-D-glucopyranosyl)-1,2-diacyl-sn-glycerol), beta-diglucosyl-DAG (3-O-(beta-D-glucopyranosyl-beta-(1-&gt;6)-D-glucopyranosyl)-1,2-diacyl-sn-glycerol) and beta-triglucosyl-DAG (3-O-(beta-D-glucopyranosyl-beta-(1-&gt;6)-D-glucopyranosyl-beta-(1-&gt;6)-D-glucopyranosyl)-1,2-diacyl-sn-glycerol). Beta-diglucosyl-DAG is the predominant glycolipid found in Bacillales and is also used as a membrane anchor for lipoteichoic acid (LTA). The chain is Processive diacylglycerol beta-glucosyltransferase from Bacillus thuringiensis (strain Al Hakam).